The following is a 1363-amino-acid chain: Vascular endothelial growth factor receptor 3 (1363 aa).

A signal peptide spans 1–24 (MQPGAALNLRLWLCLGLLQGLANG). At 25–775 (YSMTPPTLNI…EGSEDKGSME (751 aa)) the chain is on the extracellular side. Residues Asn-33, Asn-104, Asn-166, Asn-251, Asn-299, and Asn-411 are each glycosylated (N-linked (GlcNAc...) asparagine). Ig-like C2-type domains lie at 44–118 (GDSL…YIKA), 151–213 (KDSM…WGDQ), 230–326 (YDIQ…TEVI), 331–415 (PFIS…ISLE), 422–552 (PHIH…FYVT), 555–671 (PDGF…KYLS), and 678–764 (PRLT…ASVA). Intrachain disulfides connect Cys-51–Cys-111 and Cys-158–Cys-206. The cysteines at positions 252 and 310 are disulfide-linked. 3 disulfides stabilise this stretch: Cys-445–Cys-534, Cys-466–Cys-486, and Cys-578–Cys-653. 6 N-linked (GlcNAc...) asparagine glycosylation sites follow: Asn-515, Asn-527, Asn-582, Asn-594, Asn-683, and Asn-690. Cys-699 and Cys-751 are oxidised to a cystine. Asn-758 is a glycosylation site (N-linked (GlcNAc...) asparagine). Residues 776-796 (IVILIGTGVIAVFFWVLLLLI) traverse the membrane as a helical segment. Over 797-1363 (FCNMKRPAHA…GSTFFADSSY (567 aa)) the chain is Cytoplasmic. Phosphotyrosine; by SRC is present on residues Tyr-830 and Tyr-833. The Protein kinase domain occupies 845 to 1173 (LHLGRVLGHG…DLVEILGDLL (329 aa)). ATP-binding positions include 851–859 (LGHGAFGKV) and Lys-879. Catalysis depends on Asp-1037, which acts as the Proton acceptor. Tyr-1063 is subject to Phosphotyrosine; by autocatalysis and SRC. A phosphotyrosine; by autocatalysis mark is found at Tyr-1068, Tyr-1230, Tyr-1231, and Tyr-1265. Positions 1288–1330 (ESRHRPEGSFSCKGPGQHMDIPRGHPDPQGRRRRPTQGAQGGK) are disordered. Over residues 1307–1317 (DIPRGHPDPQG) the composition is skewed to basic and acidic residues. Tyr-1333 and Tyr-1337 each carry phosphotyrosine; by autocatalysis and SRC. Tyr-1363 carries the post-translational modification Phosphotyrosine; by autocatalysis.

This sequence belongs to the protein kinase superfamily. Tyr protein kinase family. CSF-1/PDGF receptor subfamily. As to quaternary structure, interacts with VEGFC and VEGFD. Monomer in the absence of bound VEGFC or VEGFD. Homodimer in the presence of bound VEGFC or VEGFD. Can also form a heterodimer with KDR. Interacts with PTPN14; the interaction is enhanced by stimulation with VEGFC. Interacts with CRK, GRB2, PTK2/FAK1, SHC1, PIK3R1 and PTPN11/SHP-2. Identified in a complex with SRC and ITGB1. Autophosphorylated on tyrosine residues upon ligand binding. Autophosphorylation occurs in trans, i.e. one subunit of the dimeric receptor phosphorylates tyrosine residues on the other subunit. Phosphorylation in response to H(2)O(2) is mediated by a process that requires SRC and PRKCD activity. Phosphorylation at Tyr-1068 is required for autophosphorylation at additional tyrosine residues. Phosphorylation at Tyr-1063 and Tyr-1337 is important for interaction with CRK and subsequent activation of MAPK8. Phosphorylation at Tyr-1230, Tyr-1231 and Tyr-1337 is important for interaction with GRB2 and subsequent activation of the AKT1 and MAPK1/ERK2 and/or MAPK3/ERK1 signaling pathways. In response to endothelial cell adhesion onto collagen, can also be phosphorylated in the absence of FLT4 kinase activity by SRC. In terms of tissue distribution, expressed in adult lung and liver, and in fetal liver, brain, intestine and placenta.

It localises to the cell membrane. The protein localises to the cytoplasm. It is found in the nucleus. The catalysed reaction is L-tyrosyl-[protein] + ATP = O-phospho-L-tyrosyl-[protein] + ADP + H(+). With respect to regulation, present in an inactive conformation in the absence of bound ligand. Binding of VEGFC or VEGFD leads to dimerization and activation by autophosphorylation on tyrosine residues. Functionally, tyrosine-protein kinase that acts as a cell-surface receptor for VEGFC and VEGFD, and plays an essential role in adult lymphangiogenesis and in the development of the vascular network and the cardiovascular system during embryonic development. Promotes proliferation, survival and migration of endothelial cells, and regulates angiogenic sprouting. Signaling by activated FLT4 leads to enhanced production of VEGFC, and to a lesser degree VEGFA, thereby creating a positive feedback loop that enhances FLT4 signaling. Modulates KDR signaling by forming heterodimers. Mediates activation of the MAPK1/ERK2, MAPK3/ERK1 signaling pathway, of MAPK8 and the JUN signaling pathway, and of the AKT1 signaling pathway. Phosphorylates SHC1. Mediates phosphorylation of PIK3R1, the regulatory subunit of phosphatidylinositol 3-kinase. Promotes phosphorylation of MAPK8 at 'Thr-183' and 'Tyr-185', and of AKT1 at 'Ser-473'. The chain is Vascular endothelial growth factor receptor 3 (Flt4) from Mus musculus (Mouse).